Consider the following 622-residue polypeptide: Zinc finger protein ZIC 5 (622 aa).

Disordered regions lie at residues 50-171 (MHLH…KGHS), 190-223 (HGAPLGGEQRSGSSSPQHPTPPPHPAGMFISASG), 232-251 (GSALFPALHDSPGAPGGHPL), and 321-349 (PGPHLQHHAPPPAPPPAPAPHPHHPHLPG). Residues 126–151 (APPPPAPPLPPSQSSSPPPPPPPPPA) show a composition bias toward pro residues. A compositionally biased stretch (pro residues) spans 329–340 (APPPAPPPAPAP). A C2H2-type 1; degenerate zinc finger spans residues 422–444 (EDCPREGKPFKAKYKLINHIRVH). 3 consecutive C2H2-type zinc fingers follow at residues 450–474 (FPCPFPGCGKVFARSENLKIHKRTH), 480–504 (FKCEFDGCDRKFANSSDRKKHSHVH), and 510–534 (YYCKIRGCDKSYTHPSSLRKHMKIH). Disordered stretches follow at residues 531-573 (MKIH…STLS) and 590-622 (APSHLHTPSSNGTTSESEDEEMYGNPEVMRTIH). 3 positions are modified to phosphoserine: Ser-537, Ser-541, and Ser-559. Over residues 595-604 (HTPSSNGTTS) the composition is skewed to polar residues.

It belongs to the GLI C2H2-type zinc-finger protein family.

Its subcellular location is the nucleus. Functionally, essential for neural crest development, converting cells from an epidermal fate to a neural crest cell fate. Binds to DNA. The protein is Zinc finger protein ZIC 5 (Zic5) of Mus musculus (Mouse).